A 463-amino-acid chain; its full sequence is Lipase 5 (463 aa).

Positions 1–14 (MLYLILFLIAPIYA) are cleaved as a signal peptide. An intrachain disulfide couples Cys-110 to Cys-281. The active-site Charge relay system is the Ser-194. N-linked (GlcNAc...) asparagine glycosylation occurs at Asn-229. Residues Asp-343 and His-376 each act as charge relay system in the active site. Cys-359 and Cys-404 are joined by a disulfide.

Belongs to the AB hydrolase superfamily. Lipase family. Class Lip subfamily.

The protein localises to the secreted. The enzyme catalyses a triacylglycerol + H2O = a diacylglycerol + a fatty acid + H(+). With respect to regulation, fe(2)+, Fe(3+), Hg(2+) as well as ethylenediaminetetraacetic acid (EDTA) and phenylmethanesulfonyl fluoride (PMSF) strongly inhibit the lipase activity. Surfactants such as Tween 20, Tween 80 and TritonX-100 show also inhibitory effect in the lipase activity. Sodium dodecyl sulfate (SDS) sharply decreases the lipase activity by 85%. Methanol, ethanol, and acetone have also negative effect on the lipase activity, with residual activities at 48%, 24% and 44% respectively. Finally, lipase activity is almost lost in the presence of isopropanol alcohol. Functionally, secreted lipase that is able to hydrolyze both the neutral triacylglycerols and the monopalmitate ester Tween 40, allowing the use of hydrolyzed products as carbon sources. Exhibits a preference for the short and medium chain length p-NP (C4 and C8 acyl group) esters rather than the long chain length p-NP esters (C12, C16 and C18 acyl group). Has broad lipolytic activity, which may be important for colonization and subsequent infection, therefore contributing to the persistence and virulence in human tissue. The polypeptide is Lipase 5 (Candida albicans (strain SC5314 / ATCC MYA-2876) (Yeast)).